Reading from the N-terminus, the 219-residue chain is MDFGDDFAAKEDVDPAAEFLAREQSALGDLEAEITGGSASAPPAASTDEGLGELLGGTASEGDLLSAGGTGGLESSTGSFEVIGGESNEPVGISGPPPSREEPEKIRKWREEQKQRLEEKDIEEERKKEELRQQSKKELDDWLRQIGESISKTKLASRNAEKQAATLENGTIEPGTEWERIAKLCDFNPKVNKAGKDVSRMRSIYLHLKQNPIQVQKST.

Residues Ala32–Lys136 are disordered. Positions Pro96–Arg158 are involved in binding clathrin heavy chain. Positions Ser99 to Lys136 are enriched in basic and acidic residues.

This sequence belongs to the clathrin light chain family. In terms of assembly, clathrin coats are formed from molecules containing 3 heavy chains and 3 light chains.

It localises to the cytoplasmic vesicle membrane. Its subcellular location is the membrane. The protein localises to the coated pit. Its function is as follows. Clathrin is the major protein of the polyhedral coat of coated pits and vesicles. The protein is Clathrin light chain (Clc) of Drosophila melanogaster (Fruit fly).